Here is a 473-residue protein sequence, read N- to C-terminus: Ribulose bisphosphate carboxylase large chain (473 aa).

The interval 1 to 136 (MAVKKYSAGV…RLEDVRFPLA (136 aa)) is necessary and sufficient to target proteins to carboxysomes, interacts with shell proteins. The substrate site is built by asparagine 116 and threonine 166. Residue lysine 168 is the Proton acceptor of the active site. Residue lysine 170 coordinates substrate. The Mg(2+) site is built by lysine 194, aspartate 196, and glutamate 197. The residue at position 194 (lysine 194) is an N6-carboxylysine. Histidine 287 functions as the Proton acceptor in the catalytic mechanism. Positions 288, 320, and 372 each coordinate substrate.

The protein belongs to the RuBisCO large chain family. Type I subfamily. In terms of assembly, heterohexadecamer of 8 large chains and 8 small chains. Forms a CsoS2-CsoS1-RuBisCO complex. The N-terminus (residues 1-136) interacts with shell proteins CsoS1A, CsoS1B and CsoS1C. Holo-RuBisCO interacts with the N-terminal repeats of CsoS2; binding is sensitive to ionic strength. A fusion of a single N-terminal repeat to the C-terminus of the large subunit of RuBisCO (cbbL) shows the repeat can lie between a CbbL dimer, making minor contacts to CbbS; thus each RuBisCO holoenzyme could bind 8 repeats. Requires Mg(2+) as cofactor.

The protein resides in the carboxysome. The catalysed reaction is 2 (2R)-3-phosphoglycerate + 2 H(+) = D-ribulose 1,5-bisphosphate + CO2 + H2O. It carries out the reaction D-ribulose 1,5-bisphosphate + O2 = 2-phosphoglycolate + (2R)-3-phosphoglycerate + 2 H(+). Functionally, ruBisCO catalyzes two reactions: the carboxylation of D-ribulose 1,5-bisphosphate, the primary event in carbon dioxide fixation, as well as the oxidative fragmentation of the pentose substrate. Both reactions occur simultaneously and in competition at the same active site. There are estimated to be 270 RuBisCO heterohexadecamers per carboxysome. In terms of biological role, alpha-carboxysomes are able to assemble in the absence of RuBisCO, unlike beta-carboxysomes. The RuBisCO large subunit is required for enzyme integration into carboxysomes; replacing it with the carboxysomally targeted gene (Tcr_0838, AC Q31HD9) of H.crungenus places RuBisCO in the carboxysome, while the non-carboxysomal large subunit of H.crungenus (Tcr_0427, AC Q31IK0) is not incorporated in the carboxysome. In Halothiobacillus neapolitanus (strain ATCC 23641 / c2) (Thiobacillus neapolitanus), this protein is Ribulose bisphosphate carboxylase large chain.